A 965-amino-acid chain; its full sequence is MSMLSMDGIVAGGGSSSGGGERSFVLEQKMFNTGPQNKALPTVQSSGSSSNHAPIVGESPLGTVSSTMATGDTGRVGNVTYMSSGMLGATQFMPQNSSHPSTSVMMQQVPPQNGGATRSSPTEMQQCMQAMSEDSIEMRDYNSGVHHMHPHQMQMQQQQQHHQQQYNMSYHNHQQQMQQMHYHQQQQQYQQQQAQHHQMYAPQIQQQQQQPQQQSQQQSAQQPQQSSAALQHVNESSNLSSAGSISDREPEQHGGTPQRPTAPQSSTATDKKTRKRRKAGPTEDQATPKQERKITEFMKVGGEVASGNSVARCLLTEYHQNQGSPKRQPAVQQNGSNSYDSQQQQPQMNQHEMQNSYWGVATPSLGVNNRGTPTPTQQQHYSSDSNSNSNQSPPGQGNQSGRMVRTIDEETQTDSSLSQANPQNADEVAKMNRIIEDHRRQIEELNSKNSLERRKNEASKETIKRLLIDKNQIERKALRDKTAADSPRIGCFKTTRTGDSFRDQWVDGWAFAEMDKKTEQINAERNEIASASALLKKRKPLGIGKEPKRPQAVNSQNDSNGMQPSTSSNTNGDDAIFRRPEEPKEIQYQEYIELDEIYKLRREHLRKEETDLSMEKERLEKEKQHHVRELKRASNESASQFNDHRLLHKRYLMLNLLGKGGFSEVWKAFDIEENRYVACKIHHVNKDWKEEKKANYVKHAMREKDIHKSLDHCRIVKQYDLLTIDNHSFCTVLEYVPGNDLDFYLKQNRSISEKEARSIIMQVVSALVYLNEKSTPIIHYDLKPANILLESGNTSGAIKITDFGLSKIMEGESDDHDLGIELTSQFAGTYWYLPPETFIVPPPKITCKVDVWSIGVIFYQCIYGKKPFGNDLTQQKILEYNTIINAREVSFPSKPQVSSAAQDFIRRCLQYRKEDRADVFELAKHELFRPRGAIRASVAGSLLLVIITLCQHSNRSEDRLCVSNV.

Disordered regions lie at residues 1-22, 35-72, 95-120, 172-292, 320-402, and 538-576; these read MSMLSMDGIVAGGGSSSGGGER, PQNKALPTVQSSGSSSNHAPIVGESPLGTVSSTMATGD, QNSSHPSTSVMMQQVPPQNGGATRSS, NHQQ…KQER, QNQG…QSGR, and RKPLGIGKEPKRPQAVNSQNDSNGMQPSTSSNTNGDDAI. Over residues 10-21 the composition is skewed to gly residues; sequence VAGGGSSSGGGE. Over residues 42 to 52 the composition is skewed to polar residues; that stretch reads TVQSSGSSSNH. Residues 172–231 show a composition bias toward low complexity; sequence NHQQQMQQMHYHQQQQQYQQQQAQHHQMYAPQIQQQQQQPQQQSQQQSAQQPQQSSAALQ. Polar residues-rich tracts occupy residues 233 to 244 and 320 to 341; these read VNESSNLSSAGS and QNQGSPKRQPAVQQNGSNSYDS. Over residues 342-355 the composition is skewed to low complexity; the sequence is QQQQPQMNQHEMQN. Residues 365–381 show a composition bias toward polar residues; it reads LGVNNRGTPTPTQQQHY. Positions 382–401 are enriched in low complexity; the sequence is SSDSNSNSNQSPPGQGNQSG. Over residues 552–572 the composition is skewed to polar residues; it reads AVNSQNDSNGMQPSTSSNTNG. At S634 the chain carries Phosphoserine. In terms of domain architecture, Protein kinase spans 651 to 928; sequence YLMLNLLGKG…VFELAKHELF (278 aa). ATP is bound by residues 657 to 665 and K680; that span reads LGKGGFSEV. Residue D781 is the Proton acceptor of the active site.

It belongs to the protein kinase superfamily. Ser/Thr protein kinase family. As to quaternary structure, interacts with air-2. Autophosphorylates in vitro. Phosphorylation on Ser-634 by air-2 enhances catalytic activity.

The protein resides in the nucleus. The enzyme catalyses L-seryl-[protein] + ATP = O-phospho-L-seryl-[protein] + ADP + H(+). The catalysed reaction is L-threonyl-[protein] + ATP = O-phospho-L-threonyl-[protein] + ADP + H(+). Its function is as follows. Essential for appropriate transcription during embryonic development. May act during transcription elongation to activate the RNA polymerase II large subunit (ama-1) by phosphorylating the Ser-2 residues of the C-terminal domain 7-residue repeats. Does not phosphorylate histone H3. The protein is Serine/threonine-protein kinase tousled-like 1 (tlk-1) of Caenorhabditis elegans.